The chain runs to 166 residues: Small ribosomal subunit protein uS5 (166 aa).

Residues 12–75 enclose the S5 DRBM domain; sequence YIEKLVQVNR…EAARRNMIQV (64 aa).

It belongs to the universal ribosomal protein uS5 family. In terms of assembly, part of the 30S ribosomal subunit. Contacts proteins S4 and S8.

In terms of biological role, with S4 and S12 plays an important role in translational accuracy. Its function is as follows. Located at the back of the 30S subunit body where it stabilizes the conformation of the head with respect to the body. This is Small ribosomal subunit protein uS5 from Pseudomonas entomophila (strain L48).